Reading from the N-terminus, the 325-residue chain is MIARIWSGKSPLWLLLLPLSWLYGLVSGLIRLCYRIGIKRSWRAPVPVVVVGNLTAGGNGKTPVVIWLVEQLAHRGIQAGVVSRGYGGKAESYPLLLTSQTTTEQAGDEPVLIFQRTGAPVAVSPNRSEAVQVLLAAHPVDIVITDDGLQHYALARDKEIVVIDGVRRFGNGWWLPAGPMRERASRLRTVDAVIVNGGEALPGEIPMRLIPSQAVNLLTGERREVSQLPALVAMAGIGHPPRFFATLEQCGAHLEARIPLADHQALSIVDVDPLVTVNQNLIMTEKDAVKCRAFAKSNWWYLPVDAEFSGEKPELLLQELMSLVR.

Position 55–62 (55–62) interacts with ATP; the sequence is TAGGNGKT.

This sequence belongs to the LpxK family.

The catalysed reaction is a lipid A disaccharide + ATP = a lipid IVA + ADP + H(+). It participates in glycolipid biosynthesis; lipid IV(A) biosynthesis; lipid IV(A) from (3R)-3-hydroxytetradecanoyl-[acyl-carrier-protein] and UDP-N-acetyl-alpha-D-glucosamine: step 6/6. Functionally, transfers the gamma-phosphate of ATP to the 4'-position of a tetraacyldisaccharide 1-phosphate intermediate (termed DS-1-P) to form tetraacyldisaccharide 1,4'-bis-phosphate (lipid IVA). The protein is Tetraacyldisaccharide 4'-kinase of Enterobacter sp. (strain 638).